We begin with the raw amino-acid sequence, 403 residues long: Phosphopentomutase (403 aa).

Mn(2+) is bound by residues D13, D298, H303, D339, H340, and H351.

Belongs to the phosphopentomutase family. It depends on Mn(2+) as a cofactor.

It localises to the cytoplasm. It carries out the reaction 2-deoxy-alpha-D-ribose 1-phosphate = 2-deoxy-D-ribose 5-phosphate. It catalyses the reaction alpha-D-ribose 1-phosphate = D-ribose 5-phosphate. Its pathway is carbohydrate degradation; 2-deoxy-D-ribose 1-phosphate degradation; D-glyceraldehyde 3-phosphate and acetaldehyde from 2-deoxy-alpha-D-ribose 1-phosphate: step 1/2. Its function is as follows. Isomerase that catalyzes the conversion of deoxy-ribose 1-phosphate (dRib-1-P) and ribose 1-phosphate (Rib-1-P) to deoxy-ribose 5-phosphate (dRib-5-P) and ribose 5-phosphate (Rib-5-P), respectively. The polypeptide is Phosphopentomutase (Streptococcus mutans serotype c (strain ATCC 700610 / UA159)).